The primary structure comprises 152 residues: MSEQLNTMDIKEIMSFLPHRYPFLLIDRVLDYTPGETLHAIKNVTINEPFFQGHFPVQPVMPGVLILEAMAQATGLLAYKTMKEASEDSLYYFAGIDKARFKRVVEPGDQLHFEVKMIKERRGIGVFTGEVKVDGELVCSAEIMCARREISK.

Residue H54 is part of the active site.

It belongs to the thioester dehydratase family. FabZ subfamily.

The protein resides in the cytoplasm. It carries out the reaction a (3R)-hydroxyacyl-[ACP] = a (2E)-enoyl-[ACP] + H2O. Involved in unsaturated fatty acids biosynthesis. Catalyzes the dehydration of short chain beta-hydroxyacyl-ACPs and long chain saturated and unsaturated beta-hydroxyacyl-ACPs. This is 3-hydroxyacyl-[acyl-carrier-protein] dehydratase FabZ from Shewanella woodyi (strain ATCC 51908 / MS32).